The chain runs to 262 residues: UDP-2,3-diacylglucosamine hydrolase (262 aa).

7 residues coordinate Mn(2+): Asp10, His12, Asp47, Asn86, His121, His218, and His220.

The protein belongs to the LpxH family. It depends on Mn(2+) as a cofactor.

It localises to the cell inner membrane. The protein resides in the cytoplasm. The catalysed reaction is UDP-2-N,3-O-bis[(3R)-3-hydroxytetradecanoyl]-alpha-D-glucosamine + H2O = 2-N,3-O-bis[(3R)-3-hydroxytetradecanoyl]-alpha-D-glucosaminyl 1-phosphate + UMP + 2 H(+). It functions in the pathway glycolipid biosynthesis; lipid IV(A) biosynthesis; lipid IV(A) from (3R)-3-hydroxytetradecanoyl-[acyl-carrier-protein] and UDP-N-acetyl-alpha-D-glucosamine: step 4/6. Hydrolyzes the pyrophosphate bond of UDP-2,3-diacylglucosamine to yield 2,3-diacylglucosamine 1-phosphate (lipid X) and UMP by catalyzing the attack of water at the alpha-P atom. Involved in the biosynthesis of lipid A, a phosphorylated glycolipid that anchors the lipopolysaccharide to the outer membrane of the cell. The chain is UDP-2,3-diacylglucosamine hydrolase from Porphyromonas gingivalis (strain ATCC BAA-308 / W83).